The following is a 374-amino-acid chain: 4-galactosyl-N-acetylglucosaminide 3-alpha-L-fucosyltransferase FUT5 (374 aa).

Residues 1-15 are Cytoplasmic-facing; sequence MDPLGPAKPQWLWRR. The helical; Signal-anchor for type II membrane protein transmembrane segment at 16-34 threads the bilayer; that stretch reads CLAGLLFQLLVAVCFFSYL. Residues 35–374 are Lumenal-facing; sequence RVSQDHATGS…TVRSIAAWFT (340 aa). Asn-60, Asn-105, Asn-167, and Asn-198 each carry an N-linked (GlcNAc...) asparagine glycan.

Belongs to the glycosyltransferase 10 family.

The protein resides in the golgi apparatus. The protein localises to the golgi stack membrane. It catalyses the reaction a beta-D-galactosyl-(1-&gt;3)-N-acetyl-beta-D-glucosaminyl derivative + GDP-beta-L-fucose = a beta-D-galactosyl-(1-&gt;3)-[alpha-L-fucosyl-(1-&gt;4)]-N-acetyl-beta-D-glucosaminyl derivative + GDP + H(+). The catalysed reaction is an N-acetyl-alpha-neuraminyl-(2-&gt;3)-beta-D-galactosyl-(1-&gt;4)-N-acetyl-beta-D-glucosaminyl derivative + GDP-beta-L-fucose = an alpha-Neu5Ac-(2-&gt;3)-beta-D-Gal-(1-&gt;4)-[alpha-L-Fuc-(1-&gt;3)]-beta-D-GlcNAc derivative + GDP + H(+). It carries out the reaction an alpha-Neu5Ac-(2-&gt;3)-beta-D-Gal-(1-&gt;4)-beta-D-GlcNAc-(1-&gt;3)-beta-D-Gal-(1-&gt;4)-[alpha-L-Fuc-(1-&gt;3)]-beta-D-GlcNAc derivative + GDP-beta-L-fucose = an alpha-Neu5Ac-(2-&gt;3)-beta-D-Gal-(1-&gt;4)-[alpha-L-Fuc-(1-&gt;3)]-beta-D-GlcNAc-(1-&gt;3)-beta-D-Gal-(1-&gt;4)-[alpha-L-Fuc-(1-&gt;3)]-beta-D-GlcNAc derivative + GDP + H(+). The enzyme catalyses a beta-D-galactosyl-(1-&gt;4)-N-acetyl-beta-D-glucosaminyl derivative + GDP-beta-L-fucose = a beta-D-galactosyl-(1-&gt;4)-[alpha-L-fucosyl-(1-&gt;3)]-N-acetyl-beta-D-glucosaminyl derivative + GDP + H(+). It catalyses the reaction a neolactoside nLc4Cer + GDP-beta-L-fucose = a neolactoside III(3)-alpha-Fuc-nLc4Cer + GDP + H(+). The catalysed reaction is a neolactoside nLc6Cer + GDP-beta-L-fucose = beta-D-galactosyl-(1-&gt;4)-N-acetyl-beta-D-glucosaminyl-(1-&gt;3)-beta-D-galactosyl-(1-&gt;4)-[alpha-L-fucosyl-(1-&gt;3)]-N-acetyl-beta-D-glucosaminyl-(1-&gt;3)-beta-D-galactosyl-(1-&gt;4)-beta-D-glucosyl-(1&lt;-&gt;1')-ceramide + GDP + H(+). It carries out the reaction a neolactoside nLc6Cer(d18:1(4E)) + GDP-beta-L-fucose = a neolactoside III(3)-alpha-Fuc-nLc6Cer(d18:1(4E)) + GDP + H(+). The enzyme catalyses a neolactoside nLc4Cer(d18:1(4E)) + GDP-beta-L-fucose = a neolactoside III(3)-alpha-Fuc-nLc4Cer(d18:1(4E)) + GDP + H(+). It catalyses the reaction a neolactoside VI(3)-alpha-NeuNAc-nLc6Cer + GDP-beta-L-fucose = a neolactoside VI(3)-alpha-NeuAc,III(3)-alphaFuc-nLc6Cer + GDP + H(+). The catalysed reaction is beta-D-galactosyl-(1-&gt;4)-N-acetyl-D-glucosamine + GDP-beta-L-fucose = beta-D-galactosyl-(1-&gt;4)-[alpha-L-fucosyl-(1-&gt;3)]-N-acetyl-D-glucosamine + GDP + H(+). It carries out the reaction N-acetyl-alpha-neuraminosyl-(2-&gt;3)-beta-D-galactosyl-(1-&gt;4)-N-acetyl-beta-D-glucosamine + GDP-beta-L-fucose = N-acetyl-alpha-neuraminosyl-(2-&gt;3)-beta-D-galactosyl-(1-&gt;4)-[alpha-L-fucosyl-(1-&gt;3)]-N-acetyl-beta-D-glucosamine + GDP + H(+). The enzyme catalyses alpha-L-Fuc-(1-&gt;2)-beta-D-Gal-(1-&gt;4)-D-GlcNAc + GDP-beta-L-fucose = alpha-L-Fuc-(1-&gt;2)-beta-D-Gal-(1-&gt;4)-[alpha-L-Fuc-(1-&gt;3)]-D-GlcNAc + GDP + H(+). It catalyses the reaction an alpha-Neu5Ac-(2-&gt;3)-beta-D-Gal-(1-&gt;3)-D-GlcNAc derivative + GDP-beta-L-fucose = an alpha-Neu5Ac-(2-&gt;3)-beta-D-Gal-(1-&gt;3)-[alpha-L-Fuc-(1-&gt;4)]-beta-D-GlcNAc derivative + GDP + H(+). It functions in the pathway protein modification; protein glycosylation. Functionally, catalyzes preferentially the transfer of L-fucose, from a guanosine diphosphate-beta-L-fucose, to the N-acetyl-beta-D-glucosamine (GlcNAc) of an N-acetyllactosamine unit (type 2 chain) of an oligosaccharide, or a glycoprotein- and a glycolipid-linked N-acetyllactosamine unit via an alpha (1,3) linkage and participates in the surface expression of VIM-2, Lewis X/SSEA-1 and sialyl Lewis X antigens. Preferentially transfers fucose to the GlcNAc of an internal N-acetyllactosamine unit of a poly-N-acetyllactosamine chain acceptor substrate. Also catalyzes to a lesser extend the transfer of L-fucose to the GlcNAc of a type 1 (beta-D-galactosyl-(1-&gt;3)-N-acetyl-beta-D-glucosaminyl) or H-type 1 (alpha-L-Fuc-(1-&gt;2)-beta-D-Gal-(1-&gt;3)-D-GlcNAc) chain oligosaccharide via an alpha (1,4) linkage. Preferentially catalyzes sialylated type 2 oligosaccharide acceptors over neutral type 2 or H type 2 (alpha-L-Fuc-(1-&gt;2)-beta-D-Gal-(1-&gt;4)-D-GlcNAc) oligosaccharide acceptors. Lactose-based structures are also acceptor substrates. This chain is 4-galactosyl-N-acetylglucosaminide 3-alpha-L-fucosyltransferase FUT5, found in Gorilla gorilla gorilla (Western lowland gorilla).